We begin with the raw amino-acid sequence, 407 residues long: 1-deoxy-D-xylulose 5-phosphate reductoisomerase (407 aa).

The NADPH site is built by T25, G26, S27, I28, N53, and N136. K137 provides a ligand contact to 1-deoxy-D-xylulose 5-phosphate. E138 is a binding site for NADPH. D162 serves as a coordination point for Mn(2+). Residues S163, E164, S188, and H211 each contribute to the 1-deoxy-D-xylulose 5-phosphate site. Mn(2+) is bound at residue E164. G217 contacts NADPH. 4 residues coordinate 1-deoxy-D-xylulose 5-phosphate: S224, N229, K230, and E233. E233 serves as a coordination point for Mn(2+).

Belongs to the DXR family. Mg(2+) serves as cofactor. Requires Mn(2+) as cofactor.

The catalysed reaction is 2-C-methyl-D-erythritol 4-phosphate + NADP(+) = 1-deoxy-D-xylulose 5-phosphate + NADPH + H(+). It participates in isoprenoid biosynthesis; isopentenyl diphosphate biosynthesis via DXP pathway; isopentenyl diphosphate from 1-deoxy-D-xylulose 5-phosphate: step 1/6. Catalyzes the NADPH-dependent rearrangement and reduction of 1-deoxy-D-xylulose-5-phosphate (DXP) to 2-C-methyl-D-erythritol 4-phosphate (MEP). The sequence is that of 1-deoxy-D-xylulose 5-phosphate reductoisomerase from Afipia carboxidovorans (strain ATCC 49405 / DSM 1227 / KCTC 32145 / OM5) (Oligotropha carboxidovorans).